A 251-amino-acid chain; its full sequence is Isoprenyl transferase (251 aa).

The active site involves aspartate 24. Aspartate 24 provides a ligand contact to Mg(2+). Residues 25-28 (GNGR), tryptophan 29, arginine 37, histidine 41, and 69-71 (STE) each bind substrate. The Proton acceptor role is filled by asparagine 72. Residues tryptophan 73, arginine 75, arginine 186, and 192–194 (RIS) each bind substrate. Residue glutamate 205 participates in Mg(2+) binding.

It belongs to the UPP synthase family. Homodimer. Mg(2+) is required as a cofactor.

Functionally, catalyzes the condensation of isopentenyl diphosphate (IPP) with allylic pyrophosphates generating different type of terpenoids. The sequence is that of Isoprenyl transferase from Chromobacterium violaceum (strain ATCC 12472 / DSM 30191 / JCM 1249 / CCUG 213 / NBRC 12614 / NCIMB 9131 / NCTC 9757 / MK).